We begin with the raw amino-acid sequence, 722 residues long: Probable carboxypeptidase X1 (722 aa).

An N-terminal signal peptide occupies residues 1 to 20 (MWGLLLAVTAFAPSVGLGLG). Residues 30 to 54 (APGSTLAPHSSVAQPSTKANETSER) are disordered. Positions 36 to 49 (APHSSVAQPSTKAN) are enriched in polar residues. Asn49, Asn200, Asn210, and Asn307 each carry an N-linked (GlcNAc...) asparagine glycan. An F5/8 type C domain is found at 103-263 (PGCPPLGLES…PCLRAEILAC (161 aa)). A disulfide bond links Cys105 and Cys263. Residues 287-610 (RHHNYKAMRK…DALLTYLEQV (324 aa)) enclose the Peptidase M14 domain. 2 residues coordinate Zn(2+): His349 and Glu352. N-linked (GlcNAc...) asparagine glycosylation occurs at Asn461. His487 lines the Zn(2+) pocket. The active-site Proton donor/acceptor is Glu580.

The protein belongs to the peptidase M14 family. Requires Zn(2+) as cofactor. Strongly expressed in testis and spleen. Moderately expressed in salivary gland, brain, heart, lung, and kidney. Extremely low expression in liver and muscle. No expression in eye, adrenal, and white adipose tissues.

Its subcellular location is the secreted. Its function is as follows. May be involved in cell-cell interactions. No carboxypeptidase activity was found yet. This Mus musculus (Mouse) protein is Probable carboxypeptidase X1 (Cpxm1).